Here is a 698-residue protein sequence, read N- to C-terminus: PWWP domain-containing DNA repair factor 3A (698 aa).

Disordered regions lie at residues 102 to 145 and 159 to 386; these read TSLS…EDDQ and CSPK…EEPP. A Phosphoserine modification is found at Ser-105. Residues 129 to 139 show a composition bias toward polar residues; it reads SQVSSAPSPSF. Phosphoserine occurs at positions 165, 168, and 170. Positions 200–211 are enriched in polar residues; that stretch reads DESQNGSGSQLD. Composition is skewed to basic and acidic residues over residues 212–235 and 341–350; these read HGQE…RGKA and RAGDSDRPEE. Phosphoserine is present on residues Ser-355 and Ser-356. Over residues 370 to 384 the composition is skewed to acidic residues; sequence EEEEEEEEEEEEEEE. One can recognise a PWWP domain in the interval 399 to 460; that stretch reads VGMLVWLKYQ…KHFDCKEKHA (62 aa).

Belongs to the PWWP3A family. As to quaternary structure, interacts with TP53BP1 (via BRCT domain); the interaction is not dependent on its phosphorylation status. Binds nucleosomes. Interacts with trimethylated 'Lys-36' of histone H3 (H3K36me3) (in vitro).

The protein resides in the nucleus. Functionally, involved in the DNA damage response pathway by contributing to the maintenance of chromatin architecture. Recruited to the vicinity of DNA breaks by TP53BP1 and plays an accessory role to facilitate damage-induced chromatin changes and promoting chromatin relaxation. Required for efficient DNA repair and cell survival following DNA damage. The protein is PWWP domain-containing DNA repair factor 3A of Rattus norvegicus (Rat).